A 417-amino-acid chain; its full sequence is Probable glucuronosyltransferase Os01g0926700 (417 aa).

Over 1 to 3 (MRR) the chain is Cytoplasmic. A helical; Signal-anchor for type II membrane protein transmembrane segment spans residues 4 to 24 (WVLAIAILAAAVCFFLGAQAQ). The Lumenal segment spans residues 25–417 (EVRQGHQTER…AGPVGDLKPW (393 aa)). N-linked (GlcNAc...) asparagine glycans are attached at residues Asn-144 and Asn-405.

The protein belongs to the glycosyltransferase 47 family.

Its subcellular location is the golgi apparatus membrane. In terms of biological role, involved in the synthesis of glucuronoxylan hemicellulose in secondary cell walls. The protein is Probable glucuronosyltransferase Os01g0926700 of Oryza sativa subsp. japonica (Rice).